A 179-amino-acid chain; its full sequence is Large ribosomal subunit protein uL6 (179 aa).

The protein belongs to the universal ribosomal protein uL6 family. As to quaternary structure, part of the 50S ribosomal subunit.

Its function is as follows. This protein binds to the 23S rRNA, and is important in its secondary structure. It is located near the subunit interface in the base of the L7/L12 stalk, and near the tRNA binding site of the peptidyltransferase center. The polypeptide is Large ribosomal subunit protein uL6 (Trichodesmium erythraeum (strain IMS101)).